The sequence spans 277 residues: Alternative cytochrome c oxidase subunit 2 (277 aa).

Topologically, residues 1–40 are periplasmic; that stretch reads MAVALILLLIAIGSVLFHLFSPWWWTPIATNWGYIDDTIN. The chain crosses the membrane as a helical span at residues 41 to 61; that stretch reads ITFWITGFVFTAVILFMAYCV. Topologically, residues 62–83 are cytoplasmic; the sequence is FRFHHKEGRQAAYNPENKKLEW. Residues 84–104 traverse the membrane as a helical segment; the sequence is WLSVGTGVGVAAMLAPGLVVW. At 105 to 277 the chain is on the periplasmic side; it reads HQFVTVPADA…VRAKYNSGDD (173 aa). 4 residues coordinate Cu cation: His-190, Cys-225, Cys-229, and His-233.

Belongs to the cytochrome c oxidase subunit 2 family.

The protein resides in the cell membrane. It carries out the reaction 4 Fe(II)-[cytochrome c] + O2 + 8 H(+)(in) = 4 Fe(III)-[cytochrome c] + 2 H2O + 4 H(+)(out). Functionally, cytochrome c oxidase is the component of the respiratory chain that catalyzes the reduction of oxygen to water. Subunits 1-3 form the functional core of the enzyme complex. Subunit 2 transfers the electrons from cytochrome c via its binuclear copper A center to the bimetallic center of the catalytic subunit 1. The protein is Alternative cytochrome c oxidase subunit 2 (coxM) of Bradyrhizobium diazoefficiens (strain JCM 10833 / BCRC 13528 / IAM 13628 / NBRC 14792 / USDA 110).